A 458-amino-acid chain; its full sequence is Argininosuccinate lyase (458 aa).

This sequence belongs to the lyase 1 family. Argininosuccinate lyase subfamily.

It is found in the cytoplasm. The catalysed reaction is 2-(N(omega)-L-arginino)succinate = fumarate + L-arginine. The protein operates within amino-acid biosynthesis; L-arginine biosynthesis; L-arginine from L-ornithine and carbamoyl phosphate: step 3/3. This is Argininosuccinate lyase from Salmonella typhimurium (strain LT2 / SGSC1412 / ATCC 700720).